The following is a 592-amino-acid chain: Protein phosphatase EYA1 (592 aa).

2 disordered regions span residues 1 to 95 and 240 to 320; these read MEMQ…RPYP and MTSS…PDSD. Over residues 8–26 the composition is skewed to low complexity; sequence SPHSRLSGSSESPSGPKLG. Over residues 28–63 the composition is skewed to polar residues; sequence SHINSNSMTPNGTEVKTEPMSSSETASTTADGSLNN. Low complexity-rich tracts occupy residues 64–75 and 241–253; these read FSGSAIGSSSFS and TSSN…PSTN. Polar residues predominate over residues 254–287; sequence ATYQLQEPPSGITSQAVTDPTAEYSTIHSPSTPI. Residues 288 to 303 show a composition bias toward basic and acidic residues; the sequence is KDSDSDRLRRGSDGKS. Asp-328 acts as the Nucleophile in catalysis. Mg(2+) is bound by residues Asp-328, Asp-330, and Asp-556. The Proton donor role is filled by Asp-330.

The protein belongs to the HAD-like hydrolase superfamily. EYA family. As to quaternary structure, probably interacts with SIX2, SIX4 and SIX5. Interacts with H2AX in response to DNA damage. Interacts with SIX3; promotes EYA1 translocation to the nucleus. The cofactor is Mg(2+). Sumoylated with SUMO1. In terms of tissue distribution, in the embryo, highly expressed in kidney with lower levels in brain. Weakly expressed in lung. In the adult, highly expressed in heart and skeletal muscle. Weakly expressed in brain and liver. No expression in eye or kidney.

The protein resides in the cytoplasm. It localises to the nucleus. It catalyses the reaction O-phospho-L-tyrosyl-[protein] + H2O = L-tyrosyl-[protein] + phosphate. The enzyme catalyses O-phospho-L-seryl-[protein] + H2O = L-seryl-[protein] + phosphate. The catalysed reaction is O-phospho-L-threonyl-[protein] + H2O = L-threonyl-[protein] + phosphate. In terms of biological role, functions both as protein phosphatase and as transcriptional coactivator for SIX1, and probably also for SIX2, SIX4 and SIX5. Tyrosine phosphatase that dephosphorylates 'Tyr-142' of histone H2AX (H2AXY142ph) and promotes efficient DNA repair via the recruitment of DNA repair complexes containing MDC1. 'Tyr-142' phosphorylation of histone H2AX plays a central role in DNA repair and acts as a mark that distinguishes between apoptotic and repair responses to genotoxic stress. Its function as histone phosphatase may contribute to its function in transcription regulation during organogenesis. Also has phosphatase activity with proteins phosphorylated on Ser and Thr residues (in vitro). Required for normal embryonic development of the craniofacial and trunk skeleton, kidneys and ears. Together with SIX1, it plays an important role in hypaxial muscle development; in this it is functionally redundant with EYA2. The sequence is that of Protein phosphatase EYA1 (EYA1) from Homo sapiens (Human).